Consider the following 26-residue polypeptide: Peroxidase 1 (26 aa).

D15 provides a ligand contact to Ca(2+).

Belongs to the peroxidase family. Classical plant (class III) peroxidase subfamily. It depends on heme b as a cofactor. Ca(2+) is required as a cofactor.

Its subcellular location is the secreted. The enzyme catalyses 2 a phenolic donor + H2O2 = 2 a phenolic radical donor + 2 H2O. In terms of biological role, removal of H(2)O(2), oxidation of toxic reductants, biosynthesis and degradation of lignin, suberization, auxin catabolism, response to environmental stresses such as wounding, pathogen attack and oxidative stress. These functions might be dependent on each isozyme/isoform in each plant tissue. In Vitis vinifera (Grape), this protein is Peroxidase 1.